Here is a 1098-residue protein sequence, read N- to C-terminus: Mediator of RNA polymerase II transcription subunit 5 (1098 aa).

Positions 1019-1041 are disordered; it reads PDDVQKSADMKPDTGIKEDDSEK. Positions 1021–1041 are enriched in basic and acidic residues; the sequence is DVQKSADMKPDTGIKEDDSEK.

It belongs to the Mediator complex subunit 5 family. As to quaternary structure, component of the Mediator complex.

The protein localises to the nucleus. Its function is as follows. Component of the Mediator complex, a coactivator involved in the regulated transcription of nearly all RNA polymerase II-dependent genes. Mediator functions as a bridge to convey information from gene-specific regulatory proteins to the basal RNA polymerase II transcription machinery. Mediator is recruited to promoters by direct interactions with regulatory proteins and serves as a scaffold for the assembly of a functional preinitiation complex with RNA polymerase II and the general transcription factors. The protein is Mediator of RNA polymerase II transcription subunit 5 (NUT1) of Eremothecium gossypii (strain ATCC 10895 / CBS 109.51 / FGSC 9923 / NRRL Y-1056) (Yeast).